Reading from the N-terminus, the 273-residue chain is Giardin subunit beta (273 aa).

The segment at 1-19 (MSMFTSTRTLTQTMDKPDD) is nonhelical region. The tract at residues 20–273 (LTRSATETAV…GGLSMVTKHQ (254 aa)) is rod. 2 coiled-coil regions span residues 123–175 (DTLN…YDQL) and 211–263 (NTKL…SKIQ).

Belongs to the SF-assemblin family. As to quaternary structure, interacts with BOP1 (via C-terminal WD repeats).

It localises to the cytoplasm. The protein resides in the cytoskeleton. Giardins are involved in parasite attachment to the intestinal mucosa and in the cytoskeletal disassembly and reassembly that marks the transition from infectious trophozoite to transmissible cyst. They may interact with other cytoskeletal proteins such as microtubules in the microribbons or crossbridges, to maintain the integrity of the ventral disk. The polypeptide is Giardin subunit beta (Giardia intestinalis (Giardia lamblia)).